We begin with the raw amino-acid sequence, 828 residues long: Calpain-A (828 aa).

The EF-hand 1 domain occupies 1-14 (MDDLRGFLRQAGQE). The region spanning 88 to 387 (LFEDPLFPAS…FDRVEICNLS (300 aa)) is the Calpain catalytic domain. Active-site residues include Cys-143, His-299, and Asn-327. Residues 388–557 (PDSLTEDQQN…TQNNMEENDD (170 aa)) are domain III. The tract at residues 558 to 577 (HVGYGGKADTITPGFPTPKP) is linker. The domain IV stretch occupies residues 578–828 (IDPQKEGLRR…EEWIERTIYS (251 aa)). EF-hand domains lie at 579–614 (DPQK…SMRD), 699–734 (FSKD…IAKW), 729–764 (SEIA…AGYH), and 764–799 (HLNN…IKTY). Ca(2+) contacts are provided by Asp-712, Asp-714, Ser-716, Lys-718, Glu-723, Asp-742, Thr-746, Arg-748, and Gln-753.

It belongs to the peptidase C2 family. Undergoes calcium-dependent autolytic cleavage between Lys-54 and Asn-55, which is necessary for activation of the protein. In terms of tissue distribution, localized to the anterior and posterior embryonic poles just after fertilization. Becomes distributed around the polar buds and just below the pole cells of the posterior pole during cleavage cycles. During these nuclear divisions anterior localization disappears. Localized to actin caps that underlie the plasma membrane, immediately above each nucleus at cleavage cycles 8 and 9. Localized to a small set of nerve, midgut and blood cells in adults.

Its subcellular location is the cytoplasm. With respect to regulation, activated by millimolar concentrations of calcium, and by phosphatidylinositol 4,5-diphosphate, phosphatidylinositol 4-monophosphate, phosphatidylinositol and phosphatidic acid. Calcium-regulated non-lysosomal thiol-protease. Involved in the organization of the actin-related cytoskeleton during embryogenesis. The polypeptide is Calpain-A (CalpA) (Drosophila melanogaster (Fruit fly)).